Consider the following 237-residue polypeptide: Proteasome subunit beta type-1 (237 aa).

The protein belongs to the peptidase T1B family. As to quaternary structure, the 26S proteasome consists of a 20S proteasome core and two 19S regulatory subunits. The 20S proteasome core is a barrel-shaped complex made of 28 subunits that are arranged in four stacked rings. The two outer rings are each formed by seven alpha subunits, and the two inner rings are formed by seven beta subunits. The proteolytic activity is exerted by three beta-subunits psmb5, psmb6 and psmb7.

The protein localises to the cytoplasm. It is found in the nucleus. In terms of biological role, non-catalytic component of the 20S core proteasome complex involved in the proteolytic degradation of most intracellular proteins. This complex plays numerous essential roles within the cell by associating with different regulatory particles. Associated with two 19S regulatory particles, forms the 26S proteasome and thus participates in the ATP-dependent degradation of ubiquitinated proteins. The 26S proteasome plays a key role in the maintenance of protein homeostasis by removing misfolded or damaged proteins that could impair cellular functions, and by removing proteins whose functions are no longer required. Associated with the PA200 or PA28, the 20S proteasome mediates ubiquitin-independent protein degradation. In Danio rerio (Zebrafish), this protein is Proteasome subunit beta type-1.